The sequence spans 643 residues: Protein ecdysoneless homolog (643 aa).

Disordered regions lie at residues 428–458 (EFYNSKKERKNKGKEKQEAGSSSDANMNNFD) and 501–600 (IESM…FTPV). Polar residues predominate over residues 446 to 456 (AGSSSDANMNN). Over residues 528–543 (MDFDDVEDDSEGEESN) the composition is skewed to acidic residues. The segment covering 564 to 580 (NSTLEKSFENVNQQHSS) has biased composition (polar residues). Positions 581-592 (KQNEESSKTRDE) are enriched in basic and acidic residues.

It belongs to the ECD family.

This is Protein ecdysoneless homolog from Arabidopsis thaliana (Mouse-ear cress).